We begin with the raw amino-acid sequence, 284 residues long: Bifunctional protein FolD (284 aa).

NADP(+) contacts are provided by residues 164–166 (GRS) and S189.

This sequence belongs to the tetrahydrofolate dehydrogenase/cyclohydrolase family. As to quaternary structure, homodimer.

The enzyme catalyses (6R)-5,10-methylene-5,6,7,8-tetrahydrofolate + NADP(+) = (6R)-5,10-methenyltetrahydrofolate + NADPH. It carries out the reaction (6R)-5,10-methenyltetrahydrofolate + H2O = (6R)-10-formyltetrahydrofolate + H(+). It functions in the pathway one-carbon metabolism; tetrahydrofolate interconversion. Its function is as follows. Catalyzes the oxidation of 5,10-methylenetetrahydrofolate to 5,10-methenyltetrahydrofolate and then the hydrolysis of 5,10-methenyltetrahydrofolate to 10-formyltetrahydrofolate. This Listeria monocytogenes serotype 4a (strain HCC23) protein is Bifunctional protein FolD.